Here is a 434-residue protein sequence, read N- to C-terminus: Septin-7 (434 aa).

Tyrosine 27 is modified (phosphotyrosine). The Septin-type G domain occupies 44–313; sequence RGFEFTLMVV…ENYRSRKLAA (270 aa). The interaction with SEPTIN12 stretch occupies residues 44-314; that stretch reads RGFEFTLMVV…NYRSRKLAAV (271 aa). Residues 54–61 form a G1 motif region; sequence GESGLGKS. 54–61 serves as a coordination point for GTP; the sequence is GESGLGKS. Position 74 is a phosphoserine (serine 74). Residues threonine 87, glycine 113, and 192–200 each bind GTP; that span reads KADTLTPEE. A G3 motif region spans residues 110-113; it reads DTPG. The G4 motif stretch occupies residues 191-194; sequence AKAD. Phosphothreonine is present on threonine 225. GTP contacts are provided by glycine 247 and arginine 262. A coiled-coil region spans residues 329-434; sequence TKSPLAQMEE…EKNKKKGKIF (106 aa). Serine 331 is subject to Phosphoserine. Lysine 370 bears the N6-acetyllysine mark. The span at 377–407 shows a compositional bias: basic and acidic residues; the sequence is QRRHEQMKKNLEAQHKGLEEKRRQFEDEKAN. The tract at residues 377-434 is disordered; the sequence is QRRHEQMKKNLEAQHKGLEEKRRQFEDEKANWEAQQRILEQQNSSRTLEKNKKKGKIF. Serine 421 is modified (phosphoserine). Phosphothreonine is present on threonine 423.

It belongs to the TRAFAC class TrmE-Era-EngA-EngB-Septin-like GTPase superfamily. Septin GTPase family. Septins polymerize into heterooligomeric protein complexes that form filaments, and associate with cellular membranes, actin filaments and microtubules. GTPase activity is required for filament formation. Filaments are assembled from asymmetrical heterotrimers, composed of SEPTIN2, SEPTIN6 and SEPTIN7 that associate head-to-head to form a hexameric unit. Within the trimer, directly interacts with SEPTIN6, while interaction with SEPTIN2 seems indirect. In the absence of SEPTIN6, forms homodimers. Interacts directly with CENPE and links CENPE to septin filaments composed of SEPTIN2, SEPTIN6 and SEPTIN7. Interacts with SEPTIN5, SEPTIN8, SEPTIN9 and SEPTIN11. Component of a septin core octameric complex consisting of SEPTIN12, SEPTIN7, SEPTIN6 and SEPTIN2 or SEPTIN4 in the order 12-7-6-2-2-6-7-12 or 12-7-6-4-4-6-7-12 and located in the sperm annulus; the SEPTIN12:SEPTIN7 association is mediated by the respective GTP-binding domains.

It localises to the cytoplasm. The protein localises to the chromosome. The protein resides in the centromere. It is found in the kinetochore. Its subcellular location is the cytoskeleton. It localises to the spindle. The protein localises to the cleavage furrow. The protein resides in the midbody. It is found in the cilium axoneme. Its subcellular location is the cell projection. It localises to the cilium. The protein localises to the flagellum. In terms of biological role, filament-forming cytoskeletal GTPase. Required for normal organization of the actin cytoskeleton. Required for normal progress through mitosis. Involved in cytokinesis. Required for normal association of CENPE with the kinetochore. Plays a role in ciliogenesis and collective cell movements. Forms a filamentous structure with SEPTIN12, SEPTIN6, SEPTIN2 and probably SEPTIN4 at the sperm annulus which is required for the structural integrity and motility of the sperm tail during postmeiotic differentiation. This is Septin-7 from Pan troglodytes (Chimpanzee).